We begin with the raw amino-acid sequence, 23 residues long: Toxin Acra2 (23 aa).

Residues 2–23 (KDGYIVDSNGCAPECFPTNXGC) form the LCN-type CS-alpha/beta domain.

Post-translationally, contains 4 disulfide bonds. In terms of tissue distribution, expressed by the venom gland.

It localises to the secreted. Functionally, excitatory insect toxins induce a spastic paralysis. They bind voltage-independently at site-4 of sodium channels (Nav) and shift the voltage of activation toward more negative potentials thereby affecting sodium channel activation and promoting spontaneous and repetitive firing. Is lethal to mice. Is about 1% of the total protein in the venom. The polypeptide is Toxin Acra2 (Androctonus crassicauda (Arabian fat-tailed scorpion)).